We begin with the raw amino-acid sequence, 79 residues long: Acyl carrier protein (79 aa).

Positions K6 to K79 constitute a Carrier domain. An O-(pantetheine 4'-phosphoryl)serine modification is found at S41.

It belongs to the acyl carrier protein (ACP) family. Post-translationally, 4'-phosphopantetheine is transferred from CoA to a specific serine of apo-ACP by AcpS. This modification is essential for activity because fatty acids are bound in thioester linkage to the sulfhydryl of the prosthetic group.

It is found in the cytoplasm. The protein operates within lipid metabolism; fatty acid biosynthesis. Carrier of the growing fatty acid chain in fatty acid biosynthesis. This Thermobifida fusca (strain YX) protein is Acyl carrier protein.